Consider the following 20-residue polypeptide: Thrombin-like enzyme Cdc SII (20 aa).

It belongs to the peptidase S1 family. Snake venom subfamily. As to quaternary structure, monomer. In terms of tissue distribution, expressed by the venom gland.

The protein localises to the secreted. Its activity is regulated as follows. Strongly inhibited by PMSF and moderately inhibited by leupeptin. Not inhibited by EDTA, aprotinin, pepstatin, and bestatin. Thrombin-like snake venom serine protease that coagulates human plasma and bovine fibrinogen by hydrolysis of the alpha chains (FGA) (minimum coagulation dose is 60 ug on fibrinogen). Has fibrinogenolytic activities, and degrades preferentially the Aalpha chain (FGA). Shows amidolytic activity toward N-benzoyl-L-Arg-p-nitroanilide, has a higher activity than Cdc SI. In vivo, intravenous injection induces defibrin(ogen)ation and a loss of the righting reflex and opisthotoxins, together with a typical gyroxin-like effect (18-20 minutes). Subcutaneous injection into the footpads induces moderate edema. Potentiates local hemorrhagic activity induced by metalloproteinases (BaP1). The chain is Thrombin-like enzyme Cdc SII from Crotalus durissus cumanensis (South American rattlesnake).